Consider the following 619-residue polypeptide: Threonine--tRNA ligase (619 aa).

An editing domain region spans residues 1 to 143 (MQLLLIHSDF…SRSIRIGEGE (143 aa)). The segment at 201 to 500 (PHVELMRRLE…AANGGLPMLP (300 aa)) is catalytic. Zn(2+) is bound by residues C293, H345, and H469.

The protein belongs to the class-II aminoacyl-tRNA synthetase family. In terms of assembly, homodimer. It depends on Zn(2+) as a cofactor.

It localises to the cytoplasm. The enzyme catalyses tRNA(Thr) + L-threonine + ATP = L-threonyl-tRNA(Thr) + AMP + diphosphate + H(+). Functionally, catalyzes the attachment of threonine to tRNA(Thr) in a two-step reaction: L-threonine is first activated by ATP to form Thr-AMP and then transferred to the acceptor end of tRNA(Thr). Also edits incorrectly charged L-seryl-tRNA(Thr). This is Threonine--tRNA ligase from Methanothrix thermoacetophila (strain DSM 6194 / JCM 14653 / NBRC 101360 / PT) (Methanosaeta thermophila).